We begin with the raw amino-acid sequence, 516 residues long: GMP synthase [glutamine-hydrolyzing] (516 aa).

In terms of domain architecture, Glutamine amidotransferase type-1 spans 8-198; sequence KILILDFGSQ…VVNICGCDTL (191 aa). The active-site Nucleophile is C84. Residues H172 and E174 contribute to the active site. In terms of domain architecture, GMPS ATP-PPase spans 199-391; it reads WNIENIIEND…LGLPYNMLYR (193 aa). An ATP-binding site is contributed by 226–232; the sequence is SGGVDSS.

As to quaternary structure, homodimer.

The enzyme catalyses XMP + L-glutamine + ATP + H2O = GMP + L-glutamate + AMP + diphosphate + 2 H(+). Its pathway is purine metabolism; GMP biosynthesis; GMP from XMP (L-Gln route): step 1/1. Catalyzes the synthesis of GMP from XMP. This is GMP synthase [glutamine-hydrolyzing] from Francisella tularensis subsp. holarctica (strain LVS).